Reading from the N-terminus, the 296-residue chain is Formylmethanofuran--tetrahydromethanopterin formyltransferase-like protein (296 aa).

The protein belongs to the FTR family.

The polypeptide is Formylmethanofuran--tetrahydromethanopterin formyltransferase-like protein (ehaS) (Methanothermobacter marburgensis (strain ATCC BAA-927 / DSM 2133 / JCM 14651 / NBRC 100331 / OCM 82 / Marburg) (Methanobacterium thermoautotrophicum)).